The primary structure comprises 238 residues: Leucine-rich repeat-containing protein 57 (238 aa).

8 LRR repeats span residues 39–60 (NLRT…MGKF), 62–84 (LLKS…CKLK), 85–106 (KLET…FVQL), 108–129 (ALKT…LFKL), 131–152 (NLDV…VSGL), 153–175 (QAIE…SHCP), 176–196 (RLKV…PPSI), and 201–221 (QISL…RDLE).

This Xenopus laevis (African clawed frog) protein is Leucine-rich repeat-containing protein 57 (lrrc57).